The primary structure comprises 180 residues: Ribosome maturation factor RimM (180 aa).

The 80-residue stretch at 97 to 176 (EGEFFYCDLI…KITTNNAKTL (80 aa)) folds into the PRC barrel domain.

It belongs to the RimM family. In terms of assembly, binds ribosomal protein uS19.

It is found in the cytoplasm. Its function is as follows. An accessory protein needed during the final step in the assembly of 30S ribosomal subunit, possibly for assembly of the head region. Essential for efficient processing of 16S rRNA. May be needed both before and after RbfA during the maturation of 16S rRNA. It has affinity for free ribosomal 30S subunits but not for 70S ribosomes. In Helicobacter acinonychis (strain Sheeba), this protein is Ribosome maturation factor RimM.